The chain runs to 232 residues: Large ribosomal subunit protein uL1 (232 aa).

The protein belongs to the universal ribosomal protein uL1 family. In terms of assembly, part of the 50S ribosomal subunit.

In terms of biological role, binds directly to 23S rRNA. The L1 stalk is quite mobile in the ribosome, and is involved in E site tRNA release. Its function is as follows. Protein L1 is also a translational repressor protein, it controls the translation of the L11 operon by binding to its mRNA. The sequence is that of Large ribosomal subunit protein uL1 from Bacteroides thetaiotaomicron (strain ATCC 29148 / DSM 2079 / JCM 5827 / CCUG 10774 / NCTC 10582 / VPI-5482 / E50).